The primary structure comprises 503 residues: Aminoaldehyde dehydrogenase 2, peroxisomal (503 aa).

Residues Ile28, Asp99, and Leu189 each contribute to the Na(+) site. Residue 238-245 (GSTMTGSK) participates in NAD(+) binding. The active-site Proton acceptor is Glu260. NAD(+) contacts are provided by Cys294 and Glu393. The active-site Nucleophile is Cys294. The short motif at 501 to 503 (SKL) is the Microbody targeting signal element.

This sequence belongs to the aldehyde dehydrogenase family. In terms of tissue distribution, expressed in leaves, flowers and fruits.

Its subcellular location is the peroxisome. It catalyses the reaction 4-aminobutanal + NAD(+) + H2O = 4-aminobutanoate + NADH + 2 H(+). It carries out the reaction 3-aminopropanal + NAD(+) + H2O = beta-alanine + NADH + 2 H(+). It functions in the pathway amine and polyamine biosynthesis; betaine biosynthesis via choline pathway; betaine from betaine aldehyde: step 1/1. In terms of biological role, dehydrogenase that catalyzes the oxidation of several aminoaldehydes. Metabolizes and detoxifies aldehyde products of polyamine degradation to non-toxic amino acids. Catalyzes the oxidation of 4-aminobutanal and 3-aminopropanal to 4-aminobutanoate and beta-alanine, respectively. This Malus domestica (Apple) protein is Aminoaldehyde dehydrogenase 2, peroxisomal.